Consider the following 152-residue polypeptide: Transcriptional repressor NrdR (152 aa).

Residues 3 to 34 (CPFCNHGELKVIDSRNAPEANAIKRRRECLKC) fold into a zinc finger. The 91-residue stretch at 48–138 (LQVLKRDGRY…VYRRFKDVGE (91 aa)) folds into the ATP-cone domain.

Belongs to the NrdR family. The cofactor is Zn(2+).

In terms of biological role, negatively regulates transcription of bacterial ribonucleotide reductase nrd genes and operons by binding to NrdR-boxes. The sequence is that of Transcriptional repressor NrdR from Chlamydia pneumoniae (Chlamydophila pneumoniae).